Reading from the N-terminus, the 219-residue chain is Cytidylate kinase (219 aa).

21 to 29 is an ATP binding site; the sequence is GPAASGKGT.

This sequence belongs to the cytidylate kinase family. Type 1 subfamily.

Its subcellular location is the cytoplasm. The enzyme catalyses CMP + ATP = CDP + ADP. It carries out the reaction dCMP + ATP = dCDP + ADP. The sequence is that of Cytidylate kinase from Rickettsia prowazekii (strain Madrid E).